The sequence spans 700 residues: Mitosis inducer protein blt1 (700 aa).

Polar residues-rich tracts occupy residues 1 to 11 and 43 to 53; these read MSKSAFTSKSQ and PRSTALPNLSN. 2 disordered regions span residues 1–53 and 266–293; these read MSKS…NLSN and TNNR…SKDQ. Over residues 273-284 the composition is skewed to low complexity; that stretch reads GSDGSNSNFNGG. Residues 496–575 are a coiled coil; it reads SVALDDHNRQ…LNMLQKLSMQ (80 aa). Disordered stretches follow at residues 634 to 659 and 671 to 700; these read FSSF…RKPS and SSGS…SSKM. S636 is modified (phosphoserine).

In terms of assembly, interacts with cdr2, mid1 and sad1.

It localises to the cytoplasm. The protein localises to the cytoskeleton. In terms of biological role, at the onset of mitosis, forms a medial ring structure before the arrangement of the medial actin ring. Essential for the central positioning of the division septum before the cell divides. The sequence is that of Mitosis inducer protein blt1 (blt1) from Schizosaccharomyces pombe (strain 972 / ATCC 24843) (Fission yeast).